A 224-amino-acid polypeptide reads, in one-letter code: Charged multivesicular body protein 4b (224 aa).

A disordered region spans residues 1–23; that stretch reads MSVFGKLFGAGGGKAGKGGPTPQ. Serine 2 is modified (N-acetylserine). At lysine 6 the chain carries N6-acetyllysine. Gly residues predominate over residues 8-19; sequence FGAGGGKAGKGG. Residues 23–183 are a coiled coil; the sequence is QEAIQRLRDT…EELDKNLLEI (161 aa). Position 114 is an N6-acetyllysine (lysine 114). Serine 184 and serine 223 each carry phosphoserine. Positions 185 to 224 are disordered; it reads GPETVPLPNVPSIALPSKPAKKKEEEDDDMKELENWAGSM.

It belongs to the SNF7 family. Probable core component of the endosomal sorting required for transport complex III (ESCRT-III). ESCRT-III components are thought to multimerize to form a flat lattice on the perimeter membrane of the endosome. Several assembly forms of ESCRT-III may exist that interact and act sequentially. Interacts with CHMP6 and CHMP4C. Interacts with PDCD6IP; the interaction is direct. Interacts with VPS4A; the interaction is direct. Interacts with VPS4B; the interaction is direct. Interacts with CHMP7. Interacts with CFTR; the interaction requires misfolded CFTR. Interacts with PTPN23. Interacts with CC2D1B. Post-translationally, ISGylated. Isgylation weakens its interaction with VPS4A. In terms of tissue distribution, widely expressed. Expressed at higher level in heart and skeletal muscle. Also expressed in brain, colon, thymus, spleen, kidney, liver, small intestine, placenta, lung and peripheral blood lymphocytes.

It is found in the cytoplasm. It localises to the cytosol. Its subcellular location is the late endosome membrane. The protein localises to the midbody. The protein resides in the nucleus envelope. Functionally, probable core component of the endosomal sorting required for transport complex III (ESCRT-III) which is involved in multivesicular bodies (MVBs) formation and sorting of endosomal cargo proteins into MVBs. MVBs contain intraluminal vesicles (ILVs) that are generated by invagination and scission from the limiting membrane of the endosome and mostly are delivered to lysosomes enabling degradation of membrane proteins, such as stimulated growth factor receptors, lysosomal enzymes and lipids. The MVB pathway appears to require the sequential function of ESCRT-O, -I,-II and -III complexes. ESCRT-III proteins mostly dissociate from the invaginating membrane before the ILV is released. The ESCRT machinery also functions in topologically equivalent membrane fission events, such as the terminal stages of cytokinesis. Together with SPAST, the ESCRT-III complex promotes nuclear envelope sealing and mitotic spindle disassembly during late anaphase. Plays a role in the endosomal sorting pathway. ESCRT-III proteins are believed to mediate the necessary vesicle extrusion and/or membrane fission activities, possibly in conjunction with the AAA ATPase VPS4. When overexpressed, membrane-assembled circular arrays of CHMP4B filaments can promote or stabilize negative curvature and outward budding. CHMP4A/B/C are required for the exosomal release of SDCBP, CD63 and syndecan. Majority of the protein exists in a folded closed conformation. (Microbial infection) The ESCRT machinery also functions in topologically equivalent membrane fission events, such as the budding of enveloped viruses (HIV-1 and other lentiviruses). Via its interaction with PDCD6IP involved in HIV-1 p6- and p9-dependent virus release. The protein is Charged multivesicular body protein 4b (CHMP4B) of Homo sapiens (Human).